The following is a 162-amino-acid chain: MQQRSNRRSCSYIPLGVHNNAEKSLCTEVAPARKNKRSITTSPIVNINVVERRLFNLELEKQQLRAKNLSENTGGGSPNGGAYLDAKKGVREQDQYQGGPSKELDRLQPPPSMKKSPPRKKKSLKDLIYETNKTFYQVDSNKVKYKVGLSKKQLLPSKTVDN.

A disordered region spans residues 67-124 (KNLSENTGGGSPNGGAYLDAKKGVREQDQYQGGPSKELDRLQPPPSMKKSPPRKKKSL). The segment covering 85 to 94 (DAKKGVREQD) has biased composition (basic and acidic residues).

As to quaternary structure, interacts with RAD51.

Its subcellular location is the nucleus. The protein resides in the chromosome. In terms of biological role, involved in regulation of meiotic recombination and repair of DNA damage. Inhibits RAD51-mediated recombination when the meiotic recombination machinery is impaired. This is Meiosis-specific protein HED1 (HED1) from Saccharomyces cerevisiae (strain ATCC 204508 / S288c) (Baker's yeast).